The primary structure comprises 774 residues: Beta-xylosidase/alpha-L-arabinofuranosidase 2 (774 aa).

Positions 1–33 are cleaved as a signal peptide; it reads MASVENRTPNVSVFLCFFVLFATLLLSGGRVSS. Asn136 carries an N-linked (GlcNAc...) asparagine glycan. Residue Asp303 is part of the active site. An N-linked (GlcNAc...) asparagine glycan is attached at Asn437.

The protein belongs to the glycoside hydrolase 3 family.

The protein resides in the secreted. It is found in the extracellular space. The protein localises to the extracellular matrix. The enzyme catalyses Hydrolysis of (1-&gt;4)-beta-D-xylans, to remove successive D-xylose residues from the non-reducing termini.. The catalysed reaction is Hydrolysis of terminal non-reducing alpha-L-arabinofuranoside residues in alpha-L-arabinosides.. A bifunctional beta-xylosidase/alpha-L-arabinosidase, exo-enzyme that acts synergistically with endohydrolases. Releases xylose and arabinose from cell walls. The sequence is that of Beta-xylosidase/alpha-L-arabinofuranosidase 2 from Medicago sativa subsp. varia (Alfalfa).